The following is a 395-amino-acid chain: Major capsid protein P3 (395 aa).

In terms of assembly, homotrimer.

The protein localises to the virion. Functionally, major capsid protein self-assembles to form an icosahedral capsid with a pseudo T=25 symmetry, about 66 nm in diameter, and consisting of 240 capsid proteins trimers. The capsid encapsulates an inner membrane and the genomic dsDNA genome. The major coat protein P3 and two assembly factors (P10 and P17) are needed during the assembly of the virus particle inside the host cell, when the capsid protein multimers are capable of enclosing the host-derived membrane, containing the virus-encoded membrane-associated proteins. This is Major capsid protein P3 (III) from Acinetobacter calcoaceticus (Arthrobacter siderocapsulatus).